A 79-amino-acid chain; its full sequence is Small ribosomal subunit protein bS18 (79 aa).

It belongs to the bacterial ribosomal protein bS18 family. Part of the 30S ribosomal subunit. Forms a tight heterodimer with protein bS6.

Functionally, binds as a heterodimer with protein bS6 to the central domain of the 16S rRNA, where it helps stabilize the platform of the 30S subunit. This Enterococcus faecalis (strain ATCC 700802 / V583) protein is Small ribosomal subunit protein bS18.